The following is a 783-amino-acid chain: NADH-quinone oxidoreductase subunit 3 (783 aa).

A 2Fe-2S ferredoxin-type domain is found at 1-99; the sequence is MVRVKVNDRI…GMVVDTLSDV (99 aa). Residues Cys-34, Cys-45, Cys-48, and Cys-83 each contribute to the [2Fe-2S] cluster site. The 4Fe-4S His(Cys)3-ligated-type domain occupies 99–138; it reads VVREAQAGMVEFTLLNHPLDCPTCDKGGACELQDRTVEYG. Positions 115, 119, 122, 128, 181, 184, 187, 230, 256, 259, 263, and 291 each coordinate [4Fe-4S] cluster. The 4Fe-4S Mo/W bis-MGD-type domain maps to 249-305; sequence MEETPTTCALCPVGCGITADTRSGELLRIRAREVPEVNEIWICDAGRFGHEWADQNR.

This sequence belongs to the complex I 75 kDa subunit family. In terms of assembly, NDH-1 is composed of 15 different subunits, Nqo1 to Nqo15. The complex has a L-shaped structure, with the hydrophobic arm (subunits Nqo7, Nqo8 and Nqo10 to Nqo14) embedded in the membrane and the hydrophilic peripheral arm (subunits Nqo1 to Nqo6, Nqo9 and Nqo15) protruding into the bacterial cytoplasm. The hydrophilic domain contains all the redox centers. [2Fe-2S] cluster serves as cofactor. Requires [4Fe-4S] cluster as cofactor.

It localises to the cell membrane. It carries out the reaction a quinone + NADH + 5 H(+)(in) = a quinol + NAD(+) + 4 H(+)(out). NDH-1 shuttles electrons from NADH, via FMN and iron-sulfur (Fe-S) centers, to quinones in the respiratory chain. The immediate electron acceptor for the enzyme in this species is menaquinone. Couples the redox reaction to proton translocation (for every two electrons transferred, four hydrogen ions are translocated across the cytoplasmic membrane), and thus conserves the redox energy in a proton gradient required for the synthesis of ATP. In Thermus thermophilus (strain ATCC 27634 / DSM 579 / HB8), this protein is NADH-quinone oxidoreductase subunit 3 (nqo3).